The primary structure comprises 397 residues: Zinc finger CCCH domain-containing protein 33 (397 aa).

C3H1-type zinc fingers lie at residues 40–68, 85–113, 131–159, 274–302, and 320–348; these read RPGE…HPRD, RIGQ…HPRN, RSNE…HPQP, RPGQ…HPRD, and RPGE…HPMR. Residues 361 to 397 form a disordered region; sequence EVVETSTGKSRRLSVSETRQAATTSSGKDTTIDNTQQ. Over residues 364–397 the composition is skewed to polar residues; it reads ETSTGKSRRLSVSETRQAATTSSGKDTTIDNTQQ.

It is found in the nucleus. In Arabidopsis thaliana (Mouse-ear cress), this protein is Zinc finger CCCH domain-containing protein 33 (ZFN1).